The primary structure comprises 395 residues: MAQLETRTEPMVVNFGPHHPSMHGVLRLVVTLDGENVIDCEPVIGYLHRGMEKIAENRTNVMYVPYVSRMDYAAGMFYEAIVVNAPERLANISVPKRASYIRVLMLELNRIANHLLWLGPFLADVGAQTPFFYIFREREMIYDLWEAATGQRLINNNFFRIGGVACDLPYGWLEKCIDFCDWFAPKIDEYEKLITNNPIFKKRIEGLGTIERDQAINWSLSGPMLRASGVSWDLRKVDNYECYDDFDWKIASEKEGDCYARYRVRVEEMRQSLKIIRQACEMIPGGPTENLEAKRMATDDKKSDIFGIDYQYVAKKVAPTFKIPNGELYTRLESGKGEIGVFIQGNNEVTPWRFKIRAADLNNLQILPHILKGAKIADIMAILGSIDVIMGSVDR.

The protein belongs to the complex I 49 kDa subunit family. As to quaternary structure, NDH-1 can be composed of about 15 different subunits; different subcomplexes with different compositions have been identified which probably have different functions.

It localises to the cellular thylakoid membrane. It carries out the reaction a plastoquinone + NADH + (n+1) H(+)(in) = a plastoquinol + NAD(+) + n H(+)(out). The enzyme catalyses a plastoquinone + NADPH + (n+1) H(+)(in) = a plastoquinol + NADP(+) + n H(+)(out). In terms of biological role, NDH-1 shuttles electrons from an unknown electron donor, via FMN and iron-sulfur (Fe-S) centers, to quinones in the respiratory and/or the photosynthetic chain. The immediate electron acceptor for the enzyme in this species is believed to be plastoquinone. Couples the redox reaction to proton translocation, and thus conserves the redox energy in a proton gradient. Cyanobacterial NDH-1 also plays a role in inorganic carbon-concentration. This chain is NAD(P)H-quinone oxidoreductase subunit H, found in Prochlorococcus marinus (strain MIT 9515).